The chain runs to 2839 residues: Bifunctional DNA-directed RNA polymerase subunit beta-beta' (2839 aa).

Residues 1–1433 (MVDSSYMCAS…CLNVALKQNN (1433 aa)) are DNA-directed RNA polymerase subunit beta. The segment at 1436-2839 (IEDISHTNIA…KESVAESRYN (1404 aa)) is DNA-directed RNA polymerase subunit beta'. Residues Cys-1501, Cys-1503, Cys-1516, and Cys-1519 each coordinate Zn(2+). Residues Asp-1893, Asp-1895, and Asp-1897 each contribute to the Mg(2+) site. Zn(2+) is bound by residues Cys-2238, Cys-2312, Cys-2319, and Cys-2322.

The protein in the N-terminal section; belongs to the RNA polymerase beta chain family. This sequence in the C-terminal section; belongs to the RNA polymerase beta' chain family. As to quaternary structure, the RNAP catalytic core consists of 2 alpha, 1 beta/beta' and 1 omega subunit. When a sigma factor is associated with the core the holoenzyme is formed, which can initiate transcription. Mg(2+) is required as a cofactor. The cofactor is Zn(2+).

It catalyses the reaction RNA(n) + a ribonucleoside 5'-triphosphate = RNA(n+1) + diphosphate. Its function is as follows. DNA-dependent RNA polymerase catalyzes the transcription of DNA into RNA using the four ribonucleoside triphosphates as substrates. The chain is Bifunctional DNA-directed RNA polymerase subunit beta-beta' (rpoBC) from Wolbachia sp. subsp. Brugia malayi (strain TRS).